Consider the following 181-residue polypeptide: Histone deacetylase complex subunit SAP30L (181 aa).

The segment at 26-74 (CCLIDGGERCPRPAGNASFSKRVQKSISQKKLKLDIDKSVRHLYICDFH) adopts an Atypical zinc-finger fold. The segment at 82–103 (RNKRKRKTSDDGGDSPEHETDV) is disordered. The Nuclear localization signal (NLS) motif lies at 83 to 88 (NKRKRK). Residues 85 to 87 (RKR) form an important for DNA and phosphoinositide binding region.

This sequence belongs to the SAP30 family. As to quaternary structure, interacts with components of the histone deacetylase complex sin3a, hdac1 and hdac2. Binds histones and nucleosomes.

The protein resides in the nucleus. It is found in the nucleolus. Functions as a transcription repressor, probably via its interaction with histone deacetylase complexes. Involved in the functional recruitment of the class 1 Sin3-histone deacetylase complex (HDAC) to the nucleolus. Binds DNA, apparently without sequence-specificity, and bends bound double-stranded DNA. Binds phosphoinositol phosphates (phosphoinositol 3-phosphate, phosphoinositol 4-phosphate and phosphoinositol 5-phosphate) via the same basic sequence motif that mediates DNA binding and nuclear import. In Xenopus tropicalis (Western clawed frog), this protein is Histone deacetylase complex subunit SAP30L (sap30l).